Here is a 995-residue protein sequence, read N- to C-terminus: MGMRPPSGLPSLSRRSRVLLVAAVVLAALLLLGPRFTDAYTNWLWFGEVGFREVFLTVVVTRIILFAAVALFVGATVWLALLLAYRTRPVFVPMAGPNDPIARYRTTVMSRLKTFGIGIPVLLGLLAGLVAQSNWVTVQLFLNGGDFGEQDPQFHLDVGFYAFDLPFYRMVLNWMFVAVVIAFFASLVTHYIFGGLRLSGREGTLTRPARIQLAVIAGLFVLLKAVAYWFDRYDLLSSSRKEPTFYGGSFTDINAVLPAKLILLAIAVICAVAFFAGVVLRDLRVPAMAAALLVLSSVLVGAVYPLVVEQFSVRPNAADKESEYIERNIAATRQAFGITSDKIEYKDYKGESDKNPLDVPVDAATIGNARLLDPNILSPTFTQLRQLKNFYGFPESLDIDRYNLDGNLQDYIVAARELSPAALTGNQTDWINKHTVYTHGNGFVAAPANRVNKPQSEDVAAGGSSDSGYPIFLVSDLFTPKDRQRIPVEQPRIYFGELISQSDPDYAIVGGAEGQAPREYDSDTAQYTYTGKGGVPIGNWFNRLAFAAKYAERNILFSSAIGDDSKIIFNRSPRERVQKVAPWLTTDGNAYPAVVDERIVWIVDAYTTLDNYPYAQKTSLEGAVEDSIDKKTGRLLPRKEVSYIRNSVKATVDAYDGTVTLYEVDSTDPVLKAWRGVFPGAVKPESEISPELRAHFRYPEDLFKVQREMLTKYHVDNPREFFTNNAFWSVPSDPTIEGGSFNQPPYYVLLGDPKTNRPVFNLTSAMVGYNRQFLSAYISVRSDPDDYGKFTILRLPTDTQTQGPQQTQNTMTTAPQVSQEKTLLSNSNKIRYGNLLTLPIADGGILYVEPFYNERNTGPNTATFPQLLRVLVSYRDQAGSVKVGYASTLAEALNQVLPGAGSLATPFGGDPATRPQPGTAPPVVDSTQPPADGGTPQPQTTPPPTGSAAKDAAAAELDRKIEAVRNAMRSGNFQDFGKALEELEAAVKTYQDAGR.

7 consecutive transmembrane segments (helical) span residues 18–38 (VLLVAAVVLAALLLLGPRFTD), 63–83 (IILFAAVALFVGATVWLALLL), 115–135 (FGIGIPVLLGLLAGLVAQSNW), 176–196 (FVAVVIAFFASLVTHYIFGGL), 211–231 (IQLAVIAGLFVLLKAVAYWFD), 260–280 (KLILLAIAVICAVAFFAGVVL), and 288–308 (MAAALLVLSSVLVGAVYPLVV). Residues 904-957 (ATPFGGDPATRPQPGTAPPVVDSTQPPADGGTPQPQTTPPPTGSAAKDAAAAEL) are disordered. 2 stretches are compositionally biased toward low complexity: residues 927 to 938 (TQPPADGGTPQP) and 946 to 955 (GSAAKDAAAA).

The protein belongs to the UPF0182 family.

The protein resides in the cell membrane. The polypeptide is UPF0182 protein NFA_45260 (Nocardia farcinica (strain IFM 10152)).